The sequence spans 520 residues: Ribonuclease Y (520 aa).

Residues 1–21 (MEILIIVIAAVVGLALGFAIA) traverse the membrane as a helical segment. Residues 210 to 295 (CVSVFNLESD…EVVKKTRKQI (86 aa)) form the KH domain. Positions 336-429 (LLQHSREVAK…VQVCDAISGA (94 aa)) constitute an HD domain.

Belongs to the RNase Y family.

The protein resides in the cell membrane. In terms of biological role, endoribonuclease that initiates mRNA decay. This is Ribonuclease Y from Christiangramia forsetii (strain DSM 17595 / CGMCC 1.15422 / KT0803) (Gramella forsetii).